Consider the following 84-residue polypeptide: Large ribosomal subunit protein bL27 (84 aa).

The segment at 1-21 is disordered; it reads MAHKKAGGSTRNGRDSNPKYL.

This sequence belongs to the bacterial ribosomal protein bL27 family.

The chain is Large ribosomal subunit protein bL27 from Francisella tularensis subsp. holarctica (strain FTNF002-00 / FTA).